The chain runs to 310 residues: Translocator protein BipD (310 aa).

Coiled coils occupy residues 127–171 and 250–299; these read DPIL…LQDY and DTAR…AIST.

Belongs to the invasin protein D family.

It localises to the secreted. Its function is as follows. Required for invasion of epithelial cells, as well as for survival within host cells, escape from endocytic vesicles and subsequent actin-tail formation. Probably regulates the secretion of effectors BipB and BipC and their final integration into the target cell membrane. This Burkholderia pseudomallei (strain 1106a) protein is Translocator protein BipD (bipD).